We begin with the raw amino-acid sequence, 801 residues long: Phenylalanine--tRNA ligase beta subunit (801 aa).

The tRNA-binding domain occupies 39–153; it reads AEGLSKLVVG…EEAVPGDAIF (115 aa). The B5 domain maps to 406-481; it reads TEPVEVSTSL…RIYGYDKLPT (76 aa). The Mg(2+) site is built by Asp459, Asp465, Glu468, and Glu469. The FDX-ACB domain occupies 708 to 801; that stretch reads TKFPAMTRDI…LTEQVGAEVR (94 aa).

It belongs to the phenylalanyl-tRNA synthetase beta subunit family. Type 1 subfamily. Tetramer of two alpha and two beta subunits. Mg(2+) is required as a cofactor.

The protein localises to the cytoplasm. The catalysed reaction is tRNA(Phe) + L-phenylalanine + ATP = L-phenylalanyl-tRNA(Phe) + AMP + diphosphate + H(+). This Streptococcus pyogenes serotype M18 (strain MGAS8232) protein is Phenylalanine--tRNA ligase beta subunit.